Reading from the N-terminus, the 501-residue chain is Cytochrome P450 monooxygenase ccsG (501 aa).

A signal peptide spans 1–28; it reads MMITLFTLAVVSIGFFLWWLLTVQPAVT. N-linked (GlcNAc...) asparagine glycosylation is found at Asn-115 and Asn-154. Cys-443 serves as a coordination point for heme.

This sequence belongs to the cytochrome P450 family. It depends on heme as a cofactor.

The protein operates within mycotoxin biosynthesis. In terms of biological role, cytochrome P450 monooxygenase; part of the gene cluster that mediates the biosynthesis of a family of the mycotoxins cytochalasins E and K. The hybrid PKS-NRPS synthetase ccsA and the enoyl reductase ccsC are responsible for fusion of phenylalanine with an octaketide backbone and subsequent release of the stable tetramic acid precursor. The polyketide synthase module (PKS) of the PKS-NRPS ccsA is responsible for the synthesis of the octaketide backbone. The downstream nonribosomal peptide synthetase (NRPS) amidates the carboxyl end of the octaketide with a phenylalanine. A reductase-like domain (R) at the C-terminus catalyzes the reductive release of the polyketide-amino acid intermediate. Because ccsA lacks a designated enoylreductase (ER) domain, the required activity is provided the enoyl reductase ccsC. Upon formation of the 11-membered carbocycle-fused perhydroisoindolone intermediate, a number of oxidative steps are required to afford the final cytochalasin E and K, including two hydroxylations at C17 and C18, one alcohol oxidation at C17, one epoxidation at C6 and C7 and two Baeyer-Villiger oxidations. The oxidative modification at C17, C18 and the C6-C7 epoxidation are likely to be catalyzed by the two cytochrome P450 oxygenases ccsD and ccsG. CcsD may be responsible for the epoxidation of the C6-C7 double bond. CcsG may be responsible for the successive oxidative modifications at C17 and C18. The double Baeyer-Villiger oxidations of ketocytochalasin to precytochalasin and cytochalasin Z(16) are among the final steps leading to cytochalasin E and K and are catalyzed by ccsB. The first oxygen insertion step follows that of the classic BVMO mechanism, generating the ester precytochalasin. Release of precytochalasin into an aqueous environment can generate the shunt product iso-precytochalasin through spontaneous isomerization. Alternatively, precytochalasin can undergo further oxidation by ccsB to yield the in-line carbonate-containing cytochalasin Z(16). Cytochalasin Z(16) is a precursor to cytochalasin E and cytochalasin K, whereas iso-precytochalasin is a precursor to cytochalasin Z(17) and rosellichalasin. The hydrolyase ccsE may catalyze hydrolysis of epoxide bond in cytochalasin E to afford cytochalasin K. The function of ccsF has not been assigned but it may play a role in post-PKS-NRPS biosynthetic step, resistance or transport of cytochalasins and related PKS-NRPS products. This Aspergillus clavatus (strain ATCC 1007 / CBS 513.65 / DSM 816 / NCTC 3887 / NRRL 1 / QM 1276 / 107) protein is Cytochrome P450 monooxygenase ccsG.